Here is a 221-residue protein sequence, read N- to C-terminus: Sugar transporter SWEET1 (221 aa).

7 helical membrane-spanning segments follow: residues 3 to 23 (AGGV…LGMF), 43 to 63 (QFLP…YGVL), 68 to 88 (TLII…LAYL), 102 to 122 (ATLL…VPDL), 129 to 149 (LGLF…ADLA), 160 to 180 (LSFS…IYGF), and 186 to 206 (YITV…GLFC). The MtN3/slv 1 domain maps to 10–94 (FLSSACVLFT…LAYLHYSPQK (85 aa)). Positions 127–212 (QQLGLFCSVF…GLFCKYPPEQ (86 aa)) constitute a MtN3/slv 2 domain. The mediates interaction with TRPV2 stretch occupies residues 149-221 (AKIVQTKSTQ…QDRKYRLLQT (73 aa)).

It belongs to the SWEET sugar transporter family. As to quaternary structure, interacts with TRPV2; the interaction probably occurs intracellularly and depends on TRPV2 N-glycosylation. Expressed at high levels in lung, placenta, spleen and thymus, at intermediate levels in brain, heart, kidney and testis, and at low levels in bone marrow, liver and lymph node. Within the thymus expression is highest in non-lymphoid cells.

The protein localises to the golgi apparatus membrane. It is found in the cell membrane. Mediates sugar transport across membranes. May regulate the expression of RAG1 a gene involved in V(D)J recombination. In Mus musculus (Mouse), this protein is Sugar transporter SWEET1 (Slc50a1).